The sequence spans 31 residues: Cytochrome b6-f complex subunit 6 (31 aa).

Residues 4–24 (ITSYFGFLLAALTITPALFIG) form a helical membrane-spanning segment.

This sequence belongs to the PetL family. As to quaternary structure, the 4 large subunits of the cytochrome b6-f complex are cytochrome b6, subunit IV (17 kDa polypeptide, PetD), cytochrome f and the Rieske protein, while the 4 small subunits are PetG, PetL, PetM and PetN. The complex functions as a dimer.

The protein resides in the plastid. The protein localises to the chloroplast thylakoid membrane. Functionally, component of the cytochrome b6-f complex, which mediates electron transfer between photosystem II (PSII) and photosystem I (PSI), cyclic electron flow around PSI, and state transitions. PetL is important for photoautotrophic growth as well as for electron transfer efficiency and stability of the cytochrome b6-f complex. In Saccharum barberi (Indian sugarcane), this protein is Cytochrome b6-f complex subunit 6.